Reading from the N-terminus, the 94-residue chain is DNA-binding protein HU (94 aa).

The tract at residues 55–94 is disordered; the sequence is RAERPGRNPKTGEPIMIAASNNPSFKPGKALKDAVKSSAG. Basic and acidic residues predominate over residues 84-94; it reads ALKDAVKSSAG.

It belongs to the bacterial histone-like protein family.

Histone-like DNA-binding protein which is capable of wrapping DNA to stabilize it, and thus to prevent its denaturation under extreme environmental conditions. In Xylella fastidiosa (strain Temecula1 / ATCC 700964), this protein is DNA-binding protein HU (hup).